Consider the following 848-residue polypeptide: Alanine--tRNA ligase (848 aa).

Residues H553, H557, C654, and H658 each contribute to the Zn(2+) site.

It belongs to the class-II aminoacyl-tRNA synthetase family. Zn(2+) is required as a cofactor.

The protein localises to the cytoplasm. It catalyses the reaction tRNA(Ala) + L-alanine + ATP = L-alanyl-tRNA(Ala) + AMP + diphosphate. Catalyzes the attachment of alanine to tRNA(Ala) in a two-step reaction: alanine is first activated by ATP to form Ala-AMP and then transferred to the acceptor end of tRNA(Ala). Also edits incorrectly charged Ser-tRNA(Ala) and Gly-tRNA(Ala) via its editing domain. The protein is Alanine--tRNA ligase of Neorickettsia sennetsu (strain ATCC VR-367 / Miyayama) (Ehrlichia sennetsu).